A 397-amino-acid polypeptide reads, in one-letter code: Lymphoid enhancer-binding factor 1 (397 aa).

Residues 1 to 60 are CTNNB1-binding; it reads MPQLSGGGGGGDPELCATDEMIPFKDEGDPQKEKIFAEISHPEEEGDLADIKSSLVNESE. Residue K25 forms a Glycyl lysine isopeptide (Lys-Gly) (interchain with G-Cter in SUMO) linkage. Positions 59–102 are disordered; sequence SEIIPASNGHEVVRQAPSSQEPYHDKAREHPDEGKHPDGGLYNK. The span at 80 to 96 shows a compositional bias: basic and acidic residues; sequence PYHDKAREHPDEGKHPD. S130 bears the Phosphoserine mark. T153 is modified (phosphothreonine; by NLK). Phosphoserine; by NLK is present on S164. 2 disordered regions span residues 164-191 and 266-296; these read SPGSHPSHIPSDVNSKQGMSRHPPAPEI and VKQEHPHTDSDLMHVKPQHEQRKEQEPKRPH. Residue K267 forms a Glycyl lysine isopeptide (Lys-Gly) (interchain with G-Cter in SUMO) linkage. Over residues 267–294 the composition is skewed to basic and acidic residues; that stretch reads KQEHPHTDSDLMHVKPQHEQRKEQEPKR. Positions 297–365 form a DNA-binding region, HMG box; that stretch reads IKKPLNAFML…LHMQLYPGWS (69 aa). The disordered stretch occupies residues 367–397; it reads RDNYGKKKKRKREKLQESTSGTGPRMTAAYI.

The protein belongs to the TCF/LEF family. As to quaternary structure, binds the armadillo repeat of CTNNB1 and forms a stable complex. Binds TLE1, ALYREF/THOC4, MDFI and MDFIC. Interacts with NLK. Interacts with EP300 and PIASG. Interacts with DAZAP2. In terms of processing, phosphorylated at Thr-153 and/or Ser-164 by NLK. Phosphorylation by NLK at these sites represses LEF1-mediated transcriptional activation of target genes of the canonical Wnt signaling pathway. In terms of tissue distribution, expressed in Vgamma1.1 and Vgamma2 gamma-delta T-cells, however not expressed in gamma-delta thymocytes fated for Il17a expression (at protein level). Expressed in alpha-beta T-cell lineages. Expressed in the thymus. Found in distinct epithelial cell compartments of the skin and is abundant in the hair-producing progenitors of the follicle.

It localises to the nucleus. Transcription factor that binds DNA in a sequence-specific manner. Participates in the Wnt signaling pathway. Activates transcription of target genes in the presence of CTNNB1 and EP300. PIASG antagonizes both Wnt-dependent and Wnt-independent activation by LEF1. TLE1, TLE2, TLE3 and TLE4 repress transactivation mediated by LEF1 and CTNNB1. Regulates T-cell receptor alpha enhancer function. Required for IL17A expressing gamma-delta T-cell maturation and development, via binding to regulator loci of BLK to modulate expression. Acts as a positive regulator of odontoblast differentiation during mesenchymal tooth germ formation, expression is repressed during the bell stage by MSX1-mediated inhibition of CTNNB1 signaling. May play a role in hair cell differentiation and follicle morphogenesis. The protein is Lymphoid enhancer-binding factor 1 of Mus musculus (Mouse).